The following is a 542-amino-acid chain: Phosphoenolpyruvate carboxykinase (ATP) (542 aa).

Positions 67, 208, and 214 each coordinate substrate. Residues Lys214, His233, and 249-257 each bind ATP; that span reads GLSGTGKTT. Residues Lys214 and His233 each coordinate Mn(2+). Asp270 contacts Mn(2+). ATP is bound by residues Glu298, Arg334, 450 to 451, and Thr456; that span reads RI. A substrate-binding site is contributed by Arg334.

This sequence belongs to the phosphoenolpyruvate carboxykinase (ATP) family. In terms of assembly, monomer. Mn(2+) serves as cofactor.

It localises to the cytoplasm. The catalysed reaction is oxaloacetate + ATP = phosphoenolpyruvate + ADP + CO2. The protein operates within carbohydrate biosynthesis; gluconeogenesis. Involved in the gluconeogenesis. Catalyzes the conversion of oxaloacetate (OAA) to phosphoenolpyruvate (PEP) through direct phosphoryl transfer between the nucleoside triphosphate and OAA. This chain is Phosphoenolpyruvate carboxykinase (ATP), found in Vibrio campbellii (strain ATCC BAA-1116).